The primary structure comprises 327 residues: Acetyl-coenzyme A carboxylase carboxyl transferase subunit beta (327 aa).

Positions 24–293 constitute a CoA carboxyltransferase N-terminal domain; the sequence is LWIKCPDTGQ…LTVTTAVEAP (270 aa). Residues 293 to 311 show a composition bias toward low complexity; that stretch reads PAEAAAKAEPEATTTEQPV. The disordered stretch occupies residues 293 to 327; that stretch reads PAEAAAKAEPEATTTEQPVAPAPTEPPAQPAAPQA. Pro residues predominate over residues 312–327; it reads APAPTEPPAQPAAPQA.

It belongs to the AccD/PCCB family. As to quaternary structure, acetyl-CoA carboxylase is a heterohexamer composed of biotin carboxyl carrier protein (AccB), biotin carboxylase (AccC) and two subunits each of ACCase subunit alpha (AccA) and ACCase subunit beta (AccD).

It localises to the cytoplasm. It catalyses the reaction N(6)-carboxybiotinyl-L-lysyl-[protein] + acetyl-CoA = N(6)-biotinyl-L-lysyl-[protein] + malonyl-CoA. It participates in lipid metabolism; malonyl-CoA biosynthesis; malonyl-CoA from acetyl-CoA: step 1/1. Component of the acetyl coenzyme A carboxylase (ACC) complex. Biotin carboxylase (BC) catalyzes the carboxylation of biotin on its carrier protein (BCCP) and then the CO(2) group is transferred by the transcarboxylase to acetyl-CoA to form malonyl-CoA. In Rhodopseudomonas palustris (strain TIE-1), this protein is Acetyl-coenzyme A carboxylase carboxyl transferase subunit beta.